The following is a 433-amino-acid chain: Serine--tRNA ligase (433 aa).

236 to 238 (TAE) provides a ligand contact to L-serine. 267 to 269 (RSE) contacts ATP. Residue glutamate 290 participates in L-serine binding. 354–357 (EISS) serves as a coordination point for ATP. Serine 394 lines the L-serine pocket.

It belongs to the class-II aminoacyl-tRNA synthetase family. Type-1 seryl-tRNA synthetase subfamily. In terms of assembly, homodimer. The tRNA molecule binds across the dimer.

The protein resides in the cytoplasm. The catalysed reaction is tRNA(Ser) + L-serine + ATP = L-seryl-tRNA(Ser) + AMP + diphosphate + H(+). It carries out the reaction tRNA(Sec) + L-serine + ATP = L-seryl-tRNA(Sec) + AMP + diphosphate + H(+). It functions in the pathway aminoacyl-tRNA biosynthesis; selenocysteinyl-tRNA(Sec) biosynthesis; L-seryl-tRNA(Sec) from L-serine and tRNA(Sec): step 1/1. Catalyzes the attachment of serine to tRNA(Ser). Is also able to aminoacylate tRNA(Sec) with serine, to form the misacylated tRNA L-seryl-tRNA(Sec), which will be further converted into selenocysteinyl-tRNA(Sec). This is Serine--tRNA ligase from Acidiphilium cryptum (strain JF-5).